We begin with the raw amino-acid sequence, 524 residues long: Strychnine-10-hydroxylase (524 aa).

A helical transmembrane segment spans residues Leu-6 to Phe-26. Cys-466 contributes to the heme binding site.

This sequence belongs to the cytochrome P450 family. Heme serves as cofactor.

It localises to the membrane. It carries out the reaction strychnine + reduced [NADPH--hemoprotein reductase] + O2 = 10-hydroxystrychnine + oxidized [NADPH--hemoprotein reductase] + H2O + H(+). The protein operates within alkaloid biosynthesis. Its function is as follows. Monooxygenase involved in the biosynthesis of curare monoterpene indole alkaloids (MIAs), natural products such as strychnine, a neurotoxic compound used as a pesticide to control rodents, and its pharmacologically active derivatives, including brucine, used to regulate blood pressure. Curare alkaloids act as animal glycine receptor antagonists. Catalyzes the conversion of strychnine to 10-OH strychnine. The protein is Strychnine-10-hydroxylase of Strychnos nux-vomica (Poison nut).